A 54-amino-acid polypeptide reads, in one-letter code: UPF0391 membrane protein Bpro_0879 (54 aa).

The next 2 membrane-spanning stretches (helical) occupy residues 6–26 and 30–50; these read VVFL…IAAG and IAKI…VMGL.

This sequence belongs to the UPF0391 family.

Its subcellular location is the cell membrane. In Polaromonas sp. (strain JS666 / ATCC BAA-500), this protein is UPF0391 membrane protein Bpro_0879.